The chain runs to 214 residues: Putative germin-like protein 9-2 (214 aa).

Residues 1–25 form the signal peptide; it reads MALSYYSLLLLLLAVWAPALTLVMA. Asn-44 and Asn-60 each carry an N-linked (GlcNAc...) asparagine glycan. The Cupin type-1 domain occupies 56-202; the sequence is RKVFNTSSAP…SFKTDVPTIL (147 aa). His-104, His-106, Glu-111, and His-150 together coordinate Mn(2+).

It belongs to the germin family. Oligomer (believed to be a pentamer but probably hexamer).

Its subcellular location is the secreted. It is found in the extracellular space. The protein localises to the apoplast. Its function is as follows. May play a role in plant defense. Probably has no oxalate oxidase activity even if the active site is conserved. In Oryza sativa subsp. japonica (Rice), this protein is Putative germin-like protein 9-2.